Consider the following 191-residue polypeptide: 3-isopropylmalate dehydratase small subunit (191 aa).

This sequence belongs to the LeuD family. LeuD type 1 subfamily. In terms of assembly, heterodimer of LeuC and LeuD.

The catalysed reaction is (2R,3S)-3-isopropylmalate = (2S)-2-isopropylmalate. Its pathway is amino-acid biosynthesis; L-leucine biosynthesis; L-leucine from 3-methyl-2-oxobutanoate: step 2/4. Catalyzes the isomerization between 2-isopropylmalate and 3-isopropylmalate, via the formation of 2-isopropylmaleate. The chain is 3-isopropylmalate dehydratase small subunit from Staphylococcus saprophyticus subsp. saprophyticus (strain ATCC 15305 / DSM 20229 / NCIMB 8711 / NCTC 7292 / S-41).